The chain runs to 212 residues: Penicillin-binding protein activator LpoB (212 aa).

The N-terminal stretch at Met-1–Gly-19 is a signal peptide. A lipid anchor (N-palmitoyl cysteine) is attached at Cys-20. Cys-20 is lipidated: S-diacylglycerol cysteine. The disordered stretch occupies residues Pro-28 to Lys-73. Over residues Pro-36–Pro-49 the composition is skewed to pro residues.

The protein belongs to the LpoB family. In terms of assembly, interacts with PBP1b.

Its subcellular location is the cell outer membrane. Functionally, regulator of peptidoglycan synthesis that is essential for the function of penicillin-binding protein 1B (PBP1b). The chain is Penicillin-binding protein activator LpoB from Salmonella typhimurium (strain LT2 / SGSC1412 / ATCC 700720).